A 156-amino-acid chain; its full sequence is Small ribosomal subunit protein uS7c (156 aa).

This sequence belongs to the universal ribosomal protein uS7 family. Part of the 30S ribosomal subunit.

It localises to the plastid. Its subcellular location is the chloroplast. In terms of biological role, one of the primary rRNA binding proteins, it binds directly to 16S rRNA where it nucleates assembly of the head domain of the 30S subunit. This Chlorella vulgaris (Green alga) protein is Small ribosomal subunit protein uS7c (rps7).